A 201-amino-acid polypeptide reads, in one-letter code: Lipopolysaccharide core heptose(II)-phosphate phosphatase (201 aa).

The N-terminal stretch at 1 to 35 (MLAFTLRFIKNKRYFAILAGALVIIAGLTSQHAWS) is a signal peptide.

Belongs to the phosphoglycerate mutase family. Ais subfamily.

The protein resides in the periplasm. The protein operates within bacterial outer membrane biogenesis; lipopolysaccharide metabolism. In terms of biological role, catalyzes the dephosphorylation of heptose(II) of the outer membrane lipopolysaccharide core. The polypeptide is Lipopolysaccharide core heptose(II)-phosphate phosphatase (Salmonella enteritidis PT4 (strain P125109)).